Here is a 555-residue protein sequence, read N- to C-terminus: Transcription factor kojR (555 aa).

The segment at residues 21–47 is a DNA-binding region (zn(2)-C6 fungal-type); the sequence is CETCKLRKRKCDGHEPCTYCLRYEYQC. The tract at residues 51–73 is disordered; the sequence is PHPRRKPAASKSSARPSEEEDSP.

It is found in the nucleus. Transcription factor that regulates the gene cluster that mediates the biosynthesis of 5-hydroxy-2-hydroxymethyl-1,4-pyrone, also know as kojic acid, a by-product in the fermentation process of malting rice that acts as a chelation agent. Negatively regulates the expression of the kojic acid-related protein kap1. Improves the antioxidant capacity via the accumulation of kojic acid that is also a strong oxidant. In Aspergillus oryzae (strain ATCC 42149 / RIB 40) (Yellow koji mold), this protein is Transcription factor kojR.